The following is a 210-amino-acid chain: Holliday junction branch migration complex subunit RuvA (210 aa).

The interval 1-70 (MISYLKGNPI…DEQPILYGFA (70 aa)) is domain I. The segment at 71-149 (TAAERELFRQ…QWRKLVGITL (79 aa)) is domain II. The tract at residues 150–160 (PSTSAIPSLEV) is flexible linker. The tract at residues 160–210 (VLEDVEMTLLALGYTNEEINKAISTLSQDNQMLKNTNSEEWIREAIAWLSQ) is domain III.

Belongs to the RuvA family. In terms of assembly, homotetramer. Forms an RuvA(8)-RuvB(12)-Holliday junction (HJ) complex. HJ DNA is sandwiched between 2 RuvA tetramers; dsDNA enters through RuvA and exits via RuvB. An RuvB hexamer assembles on each DNA strand where it exits the tetramer. Each RuvB hexamer is contacted by two RuvA subunits (via domain III) on 2 adjacent RuvB subunits; this complex drives branch migration. In the full resolvosome a probable DNA-RuvA(4)-RuvB(12)-RuvC(2) complex forms which resolves the HJ.

It localises to the cytoplasm. In terms of biological role, the RuvA-RuvB-RuvC complex processes Holliday junction (HJ) DNA during genetic recombination and DNA repair, while the RuvA-RuvB complex plays an important role in the rescue of blocked DNA replication forks via replication fork reversal (RFR). RuvA specifically binds to HJ cruciform DNA, conferring on it an open structure. The RuvB hexamer acts as an ATP-dependent pump, pulling dsDNA into and through the RuvAB complex. HJ branch migration allows RuvC to scan DNA until it finds its consensus sequence, where it cleaves and resolves the cruciform DNA. This is Holliday junction branch migration complex subunit RuvA from Rippkaea orientalis (strain PCC 8801 / RF-1) (Cyanothece sp. (strain PCC 8801)).